The following is a 75-amino-acid chain: Small ribosomal subunit protein bS16 (75 aa).

It belongs to the bacterial ribosomal protein bS16 family.

This is Small ribosomal subunit protein bS16 from Campylobacter lari (strain RM2100 / D67 / ATCC BAA-1060).